A 37-amino-acid chain; its full sequence is Large ribosomal subunit protein bL36c (37 aa).

It belongs to the bacterial ribosomal protein bL36 family.

The protein resides in the plastid. It is found in the chloroplast. This is Large ribosomal subunit protein bL36c from Cycas taitungensis (Prince sago).